Here is a 501-residue protein sequence, read N- to C-terminus: L-ornithine N(5)-monooxygenase (501 aa).

A compositionally biased stretch (low complexity) spans methionine 1–asparagine 16. The tract at residues methionine 1 to proline 40 is disordered. The segment covering proline 26–glutamine 37 has biased composition (polar residues). FAD contacts are provided by residues glutamate 92 to histidine 100 and glutamine 111. Lysine 116 serves as a coordination point for substrate. Valine 177 lines the FAD pocket. Residue serine 263–serine 266 participates in NADP(+) binding. Residues asparagine 304–phenylalanine 307 and asparagine 334 each bind substrate. Asparagine 334 to serine 336 contacts NADP(+). Serine 476–leucine 478 is a binding site for FAD. Serine 479 contributes to the substrate binding site.

Belongs to the lysine N(6)-hydroxylase/L-ornithine N(5)-oxygenase family. In terms of assembly, homotetramer. It depends on FAD as a cofactor.

The catalysed reaction is L-ornithine + NADPH + O2 = N(5)-hydroxy-L-ornithine + NADP(+) + H2O. It catalyses the reaction L-ornithine + NADH + O2 = N(5)-hydroxy-L-ornithine + NAD(+) + H2O. It functions in the pathway siderophore biosynthesis. Functionally, L-ornithine N(5)-monooxygenase; part of the siderophore biosynthetic pathway. Arthroderma benhamiae produces 2 types of extracellular siderophores, ferrichrome C and ferricrocin. The biosynthesis of these siderophores depends on the hydroxylation of ornithine to N(5)-hydroxyornithine, catalyzed by the monooxygenase sidA. The structure of ferricrocin differs from ferrichrome C only by a serine for alanine substitution and the assembly of both siderophores is suggested to be performed by the nonribosomal peptide synthase (NRPS) sidC. The protein is L-ornithine N(5)-monooxygenase of Arthroderma benhamiae (strain ATCC MYA-4681 / CBS 112371) (Trichophyton mentagrophytes).